Reading from the N-terminus, the 84-residue chain is Toxin Tf2 (84 aa).

A signal peptide spans 1–20; the sequence is MKRFLLFISILMMIGTIVVG. The LCN-type CS-alpha/beta domain maps to 21–83; the sequence is KEGYAMDHEG…VWDYATNKCG (63 aa). 4 cysteine pairs are disulfide-bonded: C31-C82, C35-C58, C43-C63, and C47-C65. C82 is subject to Cysteine amide.

This sequence belongs to the long (4 C-C) scorpion toxin superfamily. Sodium channel inhibitor family. Beta subfamily. In terms of processing, contains 4 disulfide bonds. As to expression, expressed by the venom gland.

The protein resides in the secreted. Its function is as follows. Beta toxins bind voltage-independently at site-4 of sodium channels (Nav) and shift the voltage of activation toward more negative potentials thereby affecting sodium channel activation and promoting spontaneous and repetitive firing. This toxin is active against hNav1.3/SCN3A. The protein is Toxin Tf2 of Tityus fasciolatus (Central Brazilian scorpion).